A 182-amino-acid polypeptide reads, in one-letter code: ATP synthase subunit b, chloroplastic (182 aa).

Residues 33-51 (VLNIAILLSGVIYLGRNFL) form a helical membrane-spanning segment.

It belongs to the ATPase B chain family. In terms of assembly, F-type ATPases have 2 components, F(1) - the catalytic core - and F(0) - the membrane proton channel. F(1) has five subunits: alpha(3), beta(3), gamma(1), delta(1), epsilon(1). F(0) has four main subunits: a(1), b(1), b'(1) and c(10-14). The alpha and beta chains form an alternating ring which encloses part of the gamma chain. F(1) is attached to F(0) by a central stalk formed by the gamma and epsilon chains, while a peripheral stalk is formed by the delta, b and b' chains.

It is found in the plastid. It localises to the chloroplast thylakoid membrane. In terms of biological role, f(1)F(0) ATP synthase produces ATP from ADP in the presence of a proton or sodium gradient. F-type ATPases consist of two structural domains, F(1) containing the extramembraneous catalytic core and F(0) containing the membrane proton channel, linked together by a central stalk and a peripheral stalk. During catalysis, ATP synthesis in the catalytic domain of F(1) is coupled via a rotary mechanism of the central stalk subunits to proton translocation. Functionally, component of the F(0) channel, it forms part of the peripheral stalk, linking F(1) to F(0). The polypeptide is ATP synthase subunit b, chloroplastic (Guillardia theta (Cryptophyte)).